Consider the following 361-residue polypeptide: Putative geranylgeranyl pyrophosphate synthase 8, chloroplastic (361 aa).

A chloroplast-targeting transit peptide spans 1–39; the sequence is MATTVHLSSFSLFIQSRGRRDNSISSVKSLKKRTGLSPS. Residues 24–58 are disordered; that stretch reads ISSVKSLKKRTGLSPSSALTSQGGRDMIPPQGKSN. The span at 36–46 shows a compositional bias: polar residues; it reads LSPSSALTSQG. The isopentenyl diphosphate site is built by K107, R110, and H139. D146 and D152 together coordinate Mg(2+). R157 serves as a coordination point for dimethylallyl diphosphate. R158 serves as a coordination point for isopentenyl diphosphate. Dimethylallyl diphosphate is bound by residues K246, T247, Q284, K301, and K311.

It belongs to the FPP/GGPP synthase family. Monomer. Requires Mg(2+) as cofactor.

The protein localises to the plastid. Its subcellular location is the chloroplast. The catalysed reaction is isopentenyl diphosphate + dimethylallyl diphosphate = (2E)-geranyl diphosphate + diphosphate. It carries out the reaction isopentenyl diphosphate + (2E)-geranyl diphosphate = (2E,6E)-farnesyl diphosphate + diphosphate. It catalyses the reaction isopentenyl diphosphate + (2E,6E)-farnesyl diphosphate = (2E,6E,10E)-geranylgeranyl diphosphate + diphosphate. It participates in isoprenoid biosynthesis; farnesyl diphosphate biosynthesis; farnesyl diphosphate from geranyl diphosphate and isopentenyl diphosphate: step 1/1. The protein operates within isoprenoid biosynthesis; geranyl diphosphate biosynthesis; geranyl diphosphate from dimethylallyl diphosphate and isopentenyl diphosphate: step 1/1. Its pathway is isoprenoid biosynthesis; geranylgeranyl diphosphate biosynthesis; geranylgeranyl diphosphate from farnesyl diphosphate and isopentenyl diphosphate: step 1/1. Its function is as follows. Catalyzes the trans-addition of the three molecules of IPP onto DMAPP to form geranylgeranyl pyrophosphate. The protein is Putative geranylgeranyl pyrophosphate synthase 8, chloroplastic of Arabidopsis thaliana (Mouse-ear cress).